The following is a 753-amino-acid chain: Neuroendocrine convertase 1 (753 aa).

Residues 1 to 27 (MEQRGWTLQCTAFAFFCVWCALNSVKA) form the signal peptide. The propeptide occupies 28-110 (KRQFVNEWAA…QQYEKERSKR (83 aa)). The 322-residue stretch at 129–450 (QWYLQDTRMT…FGLLNAKALV (322 aa)) folds into the Peptidase S8 domain. Residues D167 and H208 each act as charge relay system in the active site. Disulfide bonds link C225–C374 and C317–C347. Residue S382 is the Charge relay system of the active site. N401 carries N-linked (GlcNAc...) asparagine glycosylation. In terms of domain architecture, P/Homo B spans 460–597 (NVPEKKECVV…KLILHGTSSQ (138 aa)). C467 and C494 form a disulfide bridge. Positions 633 to 651 (QKSLNGNLLVPKNSSSSNV) are enriched in polar residues. Residues 633–663 (QKSLNGNLLVPKNSSSSNVEGRRDEQVQGTP) form a disordered region. A glycan (N-linked (GlcNAc...) asparagine) is linked at N645.

This sequence belongs to the peptidase S8 family. Furin subfamily. Ca(2+) is required as a cofactor.

It localises to the cytoplasmic vesicle. The protein resides in the secretory vesicle. The enzyme catalyses Release of protein hormones, neuropeptides and renin from their precursors, generally by hydrolysis of -Lys-Arg-|- bonds.. Functionally, involved in the processing of hormone and other protein precursors at sites comprised of pairs of basic amino acid residues. Substrates include POMC, renin, enkephalin, dynorphin, somatostatin, insulin and AGRP. The protein is Neuroendocrine convertase 1 (Pcsk1) of Mus musculus (Mouse).